Reading from the N-terminus, the 290-residue chain is DegV domain-containing protein MG450 (290 aa).

The 287-residue stretch at 3–289 folds into the DegV domain; sequence IAFLVDSVSN…INSYAFLIQT (287 aa). 2 residues coordinate hexadecanoate: threonine 65 and serine 97.

May bind long-chain fatty acids, such as palmitate, and may play a role in lipid transport or fatty acid metabolism. In Mycoplasma genitalium (strain ATCC 33530 / DSM 19775 / NCTC 10195 / G37) (Mycoplasmoides genitalium), this protein is DegV domain-containing protein MG450.